A 198-amino-acid chain; its full sequence is Small ribosomal subunit protein uS5 (198 aa).

Residues 46–109 (LEDDVLEISM…NNAKLNIFKV (64 aa)) enclose the S5 DRBM domain.

This sequence belongs to the universal ribosomal protein uS5 family. As to quaternary structure, part of the 30S ribosomal subunit. Contacts protein S4.

In terms of biological role, with S4 and S12 plays an important role in translational accuracy. The sequence is that of Small ribosomal subunit protein uS5 from Archaeoglobus fulgidus (strain ATCC 49558 / DSM 4304 / JCM 9628 / NBRC 100126 / VC-16).